Reading from the N-terminus, the 334-residue chain is Ornithine carbamoyltransferase, catabolic (334 aa).

Carbamoyl phosphate is bound by residues Ser-57 to Thr-60, Gln-84, Arg-108, and His-135 to Gln-138. Residues Asn-168, Asp-232, and Ser-236–Met-237 contribute to the L-ornithine site. Carbamoyl phosphate contacts are provided by residues Cys-274–Leu-275 and Arg-321.

The protein belongs to the aspartate/ornithine carbamoyltransferase superfamily. OTCase family.

It is found in the cytoplasm. It carries out the reaction carbamoyl phosphate + L-ornithine = L-citrulline + phosphate + H(+). It functions in the pathway amino-acid degradation; L-arginine degradation via ADI pathway; carbamoyl phosphate from L-arginine: step 2/2. Reversibly catalyzes the transfer of the carbamoyl group from carbamoyl phosphate (CP) to the N(epsilon) atom of ornithine (ORN) to produce L-citrulline. In Avibacterium paragallinarum (Haemophilus gallinarum), this protein is Ornithine carbamoyltransferase, catabolic (arcB).